The sequence spans 928 residues: RhoGEF domain-containing protein gxcH (928 aa).

Low complexity predominate over residues 30–48; the sequence is SKSFDNNNNNNSNTNNIKN. Disordered stretches follow at residues 30–76, 90–201, and 318–410; these read SKSF…PPVP, ITNY…PPLG, and DNGV…NKDT. Positions 93–103 are enriched in polar residues; the sequence is YIPTTPPSINI. Over residues 112–123 the composition is skewed to acidic residues; it reads DNYDDNYDDNYS. Polar residues-rich tracts occupy residues 129 to 141, 175 to 187, and 334 to 367; these read TSTT…SPEF, ETFN…EGLQ, and KSGT…NLRG. Low complexity predominate over residues 377–407; the sequence is NQTTNKNNSNNNNNNTTTNNNNNNNNNNNNN. In terms of domain architecture, DH spans 484–671; the sequence is IFNKVVKEII…GKIVSDINGK (188 aa). The PH-like stretch occupies residues 699–807; the sequence is FIGEGKVKKV…NKIEDQIVSE (109 aa). Residues 835–928 form a disordered region; it reads SDSQSDFVDH…NTEPENFSFY (94 aa). Over residues 848–857 the composition is skewed to low complexity; it reads QEQQEQQQQQ.

GTPase-activating protein. The protein is RhoGEF domain-containing protein gxcH (gxcH) of Dictyostelium discoideum (Social amoeba).